A 549-amino-acid chain; its full sequence is Tigger transposable element-derived protein 7 (549 aa).

The region spanning 1–52 is the HTH psq-type domain; it reads MNKRGKYTTLNLEEKMKVLSRIEAGRSLKSVMDEFGISKSTFYDIKKNKKLI. 2 consecutive DNA-binding regions (H-T-H motif) follow at residues 28–48 and 101–132; these read LKSVMDEFGISKSTFYDIKKN and VELQAAAERFARCFGRTDFKASTGWLFRFRNR. The region spanning 68–139 is the HTH CENPB-type domain; it reads KRKRTTGAKY…RNRHAIGNRK (72 aa). The region spanning 169 to 399 is the DDE-1 domain; it reads LCLAQLYSGD…VKQITIANAW (231 aa). The segment at 527–549 is disordered; it reads FLKPRPHNIKDSFSGPSTSGSNH. Residues 540–549 are compositionally biased toward polar residues; that stretch reads SGPSTSGSNH.

It belongs to the tigger transposable element derived protein family. In terms of tissue distribution, expressed in all tissues tested. Higher expression in testis and ovary.

The protein localises to the nucleus. In Homo sapiens (Human), this protein is Tigger transposable element-derived protein 7 (TIGD7).